The following is a 200-amino-acid chain: Protein GrpE (200 aa).

The segment covering M1 to Q12 has biased composition (basic and acidic residues). The segment at M1 to D30 is disordered.

Belongs to the GrpE family. As to quaternary structure, homodimer.

Its subcellular location is the cytoplasm. Its function is as follows. Participates actively in the response to hyperosmotic and heat shock by preventing the aggregation of stress-denatured proteins, in association with DnaK and GrpE. It is the nucleotide exchange factor for DnaK and may function as a thermosensor. Unfolded proteins bind initially to DnaJ; upon interaction with the DnaJ-bound protein, DnaK hydrolyzes its bound ATP, resulting in the formation of a stable complex. GrpE releases ADP from DnaK; ATP binding to DnaK triggers the release of the substrate protein, thus completing the reaction cycle. Several rounds of ATP-dependent interactions between DnaJ, DnaK and GrpE are required for fully efficient folding. The protein is Protein GrpE of Vibrio cholerae serotype O1 (strain ATCC 39315 / El Tor Inaba N16961).